The sequence spans 249 residues: NADH dehydrogenase [ubiquinone] flavoprotein 2, mitochondrial (249 aa).

A mitochondrion-targeting transit peptide spans 1–32 (MFFSAALRARAAGLTAHWGRHVRNLHKTAKQN). At K61 the chain carries N6-acetyllysine. [2Fe-2S] cluster is bound by residues C135, C140, C176, and C180. Residue Y193 is modified to Phosphotyrosine; by SRC. The interval 213-249 (IPKPGPRSGRFSCEPAGGLTSLTEPPKGPGFGVQAGL) is disordered.

Belongs to the complex I 24 kDa subunit family. As to quaternary structure, core subunit of respiratory chain NADH dehydrogenase (Complex I) which is composed of 45 different subunits. This is a component of the flavoprotein-sulfur (FP) fragment of the enzyme. Requires [2Fe-2S] cluster as cofactor.

It is found in the mitochondrion inner membrane. The catalysed reaction is a ubiquinone + NADH + 5 H(+)(in) = a ubiquinol + NAD(+) + 4 H(+)(out). Its function is as follows. Core subunit of the mitochondrial membrane respiratory chain NADH dehydrogenase (Complex I) which catalyzes electron transfer from NADH through the respiratory chain, using ubiquinone as an electron acceptor. Parts of the peripheral arm of the enzyme, where the electrons from NADH are accepted by flavin mononucleotide (FMN) and then passed along a chain of iron-sulfur clusters by electron tunnelling to the final acceptor ubiquinone. Contains one iron-sulfur cluster. The chain is NADH dehydrogenase [ubiquinone] flavoprotein 2, mitochondrial from Pan troglodytes (Chimpanzee).